Reading from the N-terminus, the 321-residue chain is Tetraacyldisaccharide 4'-kinase (321 aa).

54-61 (SVGGTGKT) is a binding site for ATP.

The protein belongs to the LpxK family.

The catalysed reaction is a lipid A disaccharide + ATP = a lipid IVA + ADP + H(+). Its pathway is glycolipid biosynthesis; lipid IV(A) biosynthesis; lipid IV(A) from (3R)-3-hydroxytetradecanoyl-[acyl-carrier-protein] and UDP-N-acetyl-alpha-D-glucosamine: step 6/6. Its function is as follows. Transfers the gamma-phosphate of ATP to the 4'-position of a tetraacyldisaccharide 1-phosphate intermediate (termed DS-1-P) to form tetraacyldisaccharide 1,4'-bis-phosphate (lipid IVA). The protein is Tetraacyldisaccharide 4'-kinase of Rickettsia africae (strain ESF-5).